The sequence spans 401 residues: Ninja-family protein MODD (401 aa).

Disordered stretches follow at residues 95-135 (KQGV…GEGR) and 215-238 (TGNK…GLPP). Low complexity predominate over residues 105–130 (RPSGGAEAEPAAARLPASGSPSSGSS). The span at 217 to 226 (NKKTGGNVNH) shows a compositional bias: polar residues.

This sequence belongs to the Ninja family. As to quaternary structure, interacts with BZIP46, TPR3 and PUB70.

Its subcellular location is the nucleus. In terms of biological role, acts as a negative regulator of abscisic acid (ABA) signaling and drought tolerance. Mediates deactivation and degradation of BZIP46, a positive regulator of ABA signaling and drought stress tolerance. Represses BZIP46 activity via interaction with the TPR3-HDAC1 corepressor complex and down-regulation of the histone acetylation level at BZIP46 target genes. Promotes BZIP46 degradation via interaction with the U-box type ubiquitin E3 ligase PUB70. This Oryza sativa subsp. japonica (Rice) protein is Ninja-family protein MODD.